The primary structure comprises 470 residues: Arginine ADP-riboxanase OspC1 (470 aa).

NAD(+) contacts are provided by histidine 138, glutamine 139, serine 140, leucine 144, isoleucine 157, asparagine 167, phenylalanine 183, histidine 201, phenylalanine 206, aspartate 226, and glutamate 320. Residue glutamate 320 is part of the active site. ANK repeat units follow at residues 363 to 392, 399 to 431, and 438 to 467; these read IALQ…ITRQ, HELY…DVNT, and SGDC…TSDN.

This sequence belongs to the OspC family. As to quaternary structure, interacts with host calmodulin (CALM1, CALM2 and/or CALM3); specifically interacts with the apo form of calmodulin, preventing calcium-binding.

The protein localises to the secreted. The protein resides in the host nucleus. It carries out the reaction L-arginyl-[protein] + NAD(+) = ADP-riboxanated L-argininyl-[protein] + nicotinamide + NH4(+) + H(+). Its function is as follows. ADP-riboxanase effector that mediates arginine ADP-riboxanation of host caspases. ADP-riboxanation of host apoptotic caspases (CASP3, CASP8 and CASP9) prevents their activation, thereby inhibiting host cell extrinsic and intrinsic apoptosis. Does not catalyze ADP-riboxanation of host CASP4/CASP11. Independently of its ADP-riboxanase activity, acts as an inhibitor of calcium signaling by inhibiting host calmodulin, preventing activation of the JAK-STAT signaling pathway in response to interferon-beta. Mechanistically, acts by binding to the apo form of calmodulin, preventing calcium-binding and ability to activate host CaMK2 (CAMKII), which is required to stimulate the JAK-STAT signaling pathway in response to interferon-beta. This Shigella flexneri protein is Arginine ADP-riboxanase OspC1.